The following is a 145-amino-acid chain: uncharacterized protein (145 aa).

The signal sequence occupies residues 1–22 (MLTRLVLSAHLSSTTSPPWTHA). Residue Asn98 is glycosylated (N-linked (GlcNAc...) asparagine). The disordered stretch occupies residues 103 to 145 (SSGQQRQAARQEEENSICKAHDSREGRLGYPLSAHQPGSGGPN).

The protein resides in the secreted. This is an uncharacterized protein from Homo sapiens (Human).